A 237-amino-acid chain; its full sequence is 1-(5-phosphoribosyl)-5-[(5-phosphoribosylamino)methylideneamino] imidazole-4-carboxamide isomerase (237 aa).

Catalysis depends on D8, which acts as the Proton acceptor. The active-site Proton donor is D127.

Belongs to the HisA/HisF family.

It is found in the cytoplasm. The enzyme catalyses 1-(5-phospho-beta-D-ribosyl)-5-[(5-phospho-beta-D-ribosylamino)methylideneamino]imidazole-4-carboxamide = 5-[(5-phospho-1-deoxy-D-ribulos-1-ylimino)methylamino]-1-(5-phospho-beta-D-ribosyl)imidazole-4-carboxamide. It participates in amino-acid biosynthesis; L-histidine biosynthesis; L-histidine from 5-phospho-alpha-D-ribose 1-diphosphate: step 4/9. In Sulfurovum sp. (strain NBC37-1), this protein is 1-(5-phosphoribosyl)-5-[(5-phosphoribosylamino)methylideneamino] imidazole-4-carboxamide isomerase.